The primary structure comprises 831 residues: Leucine--tRNA ligase (831 aa).

A 'HIGH' region motif is present at residues 36 to 46; sequence PYPSGKLHIGH. The 'KMSKS' region signature appears at 607 to 611; the sequence is KMSKS. K610 contributes to the ATP binding site.

The protein belongs to the class-I aminoacyl-tRNA synthetase family.

The protein localises to the cytoplasm. The catalysed reaction is tRNA(Leu) + L-leucine + ATP = L-leucyl-tRNA(Leu) + AMP + diphosphate. The polypeptide is Leucine--tRNA ligase (Neorickettsia sennetsu (strain ATCC VR-367 / Miyayama) (Ehrlichia sennetsu)).